A 161-amino-acid polypeptide reads, in one-letter code: Terminase, small subunit (161 aa).

The interval 37–60 is helix-turn-helix (HTH); it reads KAEPFWHDNIRSKALDSWTPADLL. Residues 88–115 adopt a coiled-coil conformation; that stretch reads EERDEGLIKDLRKQIVELQRTILAQRRD. Residues Lys96, Lys100, Arg107, Arg114, and Arg128 each coordinate DNA.

It belongs to the Hendrixvirinae small terminase family. As to quaternary structure, homononamer; forms a ring-like structure through which genomic DNA is translocated into the capsid. Interacts with the terminase small subunit; the active complex is composed of a pentamer ring of terminase large subunits and a nonamer ring of terminase small subunits. Binds a specific sequence on the viral genome. DNA transits through the central tunnel formed by the small subunit and sequence-specific recognition for packaging initiation and termination takes place as it emerges.

Its function is as follows. The terminase small subunit binds to the packaging initiation site and regulates the ATPase activity of the terminase large subunit. The terminase lies at a unique vertex of the procapsid and is composed of two subunits, a small terminase subunit involved in viral DNA recognition (packaging sequence), and a large terminase subunit possessing endonucleolytic and ATPase activities. Both terminase subunits heterooligomerize and are docked on the portal protein to form the packaging machine. Packaging initiates by TerS recognizing the packaging sequence in the viral DNA. The nuclease activity of TerL cuts the viral DNA and the terminase-DNA complex binds to the portal of a procapsid shell. DNA is translocated into the capsid, powered by the packaging ATPase in TerL, which continues until the next site is encountered at which point the motor stops and again cuts the DNA to release the nucleocapsid filled with a unit-length genome ('unit length' packaging). This chain is Terminase, small subunit (1), found in Escherichia coli (Bacteriophage HK97).